Reading from the N-terminus, the 221-residue chain is Adenylate kinase (221 aa).

Position 10–15 (Gly-10–Thr-15) interacts with ATP. Residues Ser-30–Val-59 form an NMP region. AMP is bound by residues Thr-31, Arg-36, Glu-57–Val-59, Gly-85–Arg-88, and Gln-92. The interval Gly-122 to Asp-159 is LID. ATP is bound by residues Arg-123 and Thr-132–Tyr-133. AMP is bound by residues Arg-156 and Arg-167. Gly-207 is a binding site for ATP.

Belongs to the adenylate kinase family. Monomer.

It localises to the cytoplasm. It carries out the reaction AMP + ATP = 2 ADP. Its pathway is purine metabolism; AMP biosynthesis via salvage pathway; AMP from ADP: step 1/1. Its function is as follows. Catalyzes the reversible transfer of the terminal phosphate group between ATP and AMP. Plays an important role in cellular energy homeostasis and in adenine nucleotide metabolism. The protein is Adenylate kinase of Paraburkholderia phytofirmans (strain DSM 17436 / LMG 22146 / PsJN) (Burkholderia phytofirmans).